The primary structure comprises 263 residues: Protein YpjB (263 aa).

A compositionally biased stretch (acidic residues) spans 233–244 (DFDDSSSEDDPV). The disordered stretch occupies residues 233-263 (DFDDSSSEDDPVENSPVVTSPVVSSSKSSFQ). The segment covering 245 to 263 (ENSPVVTSPVVSSSKSSFQ) has biased composition (low complexity).

The sequence is that of Protein YpjB (ypjB) from Escherichia coli (strain K12).